Consider the following 261-residue polypeptide: MTLKARVIPCLDVKDGRVVKGVNFVDLIDAGDPVEAARAYDAAGADELCFLDITASSDNRETIFDVIARTAEQCFMPLTVGGGVRQVSDIRKLLLAGADKVSINTAAVKNPEFVAEAADKFGDQCIVVAIDAKKVSGEGEADRWEIFTHGGRQTTGIDAVEFAQKVVSLGAGEILLTSMDRDGTKAGYDVALTRAVADSVRVPVIASGGVGNLDHMVAGIRDGHATAVLAASIFHFGTYTIGEAKRYMAEAGIPMRLDPVR.

Residues aspartate 12 and aspartate 131 contribute to the active site.

This sequence belongs to the HisA/HisF family. Heterodimer of HisH and HisF.

The protein localises to the cytoplasm. It carries out the reaction 5-[(5-phospho-1-deoxy-D-ribulos-1-ylimino)methylamino]-1-(5-phospho-beta-D-ribosyl)imidazole-4-carboxamide + L-glutamine = D-erythro-1-(imidazol-4-yl)glycerol 3-phosphate + 5-amino-1-(5-phospho-beta-D-ribosyl)imidazole-4-carboxamide + L-glutamate + H(+). It participates in amino-acid biosynthesis; L-histidine biosynthesis; L-histidine from 5-phospho-alpha-D-ribose 1-diphosphate: step 5/9. IGPS catalyzes the conversion of PRFAR and glutamine to IGP, AICAR and glutamate. The HisF subunit catalyzes the cyclization activity that produces IGP and AICAR from PRFAR using the ammonia provided by the HisH subunit. This chain is Imidazole glycerol phosphate synthase subunit HisF, found in Brucella anthropi (strain ATCC 49188 / DSM 6882 / CCUG 24695 / JCM 21032 / LMG 3331 / NBRC 15819 / NCTC 12168 / Alc 37) (Ochrobactrum anthropi).